The chain runs to 132 residues: Glycine cleavage system H protein (132 aa).

The Lipoyl-binding domain maps to 24–106 (IATIGLSAFA…YGDGWLIKVR (83 aa)). Residue Lys65 is modified to N6-lipoyllysine.

The protein belongs to the GcvH family. In terms of assembly, the glycine cleavage system is composed of four proteins: P, T, L and H. (R)-lipoate serves as cofactor.

Functionally, the glycine cleavage system catalyzes the degradation of glycine. The H protein shuttles the methylamine group of glycine from the P protein to the T protein. The chain is Glycine cleavage system H protein from Rippkaea orientalis (strain PCC 8801 / RF-1) (Cyanothece sp. (strain PCC 8801)).